The primary structure comprises 119 residues: uncharacterized protein (119 aa).

The next 2 membrane-spanning stretches (helical) occupy residues 53-73 (AATI…SFLA) and 92-112 (FITH…WFLF).

It is found in the membrane. This is an uncharacterized protein from Saccharomyces cerevisiae (strain ATCC 204508 / S288c) (Baker's yeast).